The primary structure comprises 187 residues: Intermembrane transport lipoprotein PqiC (187 aa).

Positions M1–G15 are cleaved as a signal peptide. The N-palmitoyl cysteine moiety is linked to residue C16. A lipid anchor (S-diacylglycerol cysteine) is attached at C16.

As to quaternary structure, may form a complex composed of PqiA, PqiB and PqiC. Interacts with PqiB.

It is found in the cell outer membrane. In terms of biological role, component of a transport pathway that contributes to membrane integrity. The protein is Intermembrane transport lipoprotein PqiC of Escherichia coli (strain K12).